The following is a 300-amino-acid chain: tRNA dimethylallyltransferase (300 aa).

Position 9 to 16 (9 to 16 (GPTASGKS)) interacts with ATP. 11–16 (TASGKS) contributes to the substrate binding site. The interval 34–37 (DSKQ) is interaction with substrate tRNA.

It belongs to the IPP transferase family. In terms of assembly, monomer. Mg(2+) serves as cofactor.

The catalysed reaction is adenosine(37) in tRNA + dimethylallyl diphosphate = N(6)-dimethylallyladenosine(37) in tRNA + diphosphate. Catalyzes the transfer of a dimethylallyl group onto the adenine at position 37 in tRNAs that read codons beginning with uridine, leading to the formation of N6-(dimethylallyl)adenosine (i(6)A). In Ehrlichia canis (strain Jake), this protein is tRNA dimethylallyltransferase.